The primary structure comprises 122 residues: Large ribosomal subunit protein uL14 (122 aa).

This sequence belongs to the universal ribosomal protein uL14 family. In terms of assembly, part of the 50S ribosomal subunit. Forms a cluster with proteins L3 and L19. In the 70S ribosome, L14 and L19 interact and together make contacts with the 16S rRNA in bridges B5 and B8.

Functionally, binds to 23S rRNA. Forms part of two intersubunit bridges in the 70S ribosome. The protein is Large ribosomal subunit protein uL14 of Kosmotoga olearia (strain ATCC BAA-1733 / DSM 21960 / TBF 19.5.1).